Here is a 298-residue protein sequence, read N- to C-terminus: Protoheme IX farnesyltransferase (298 aa).

Transmembrane regions (helical) follow at residues 16–36, 45–65, 93–113, 114–134, 141–161, 172–192, 223–243, 244–264, and 277–297; these read VVALIVFTALVGMFLAIPDMP, ALGFLGIWLAASAAAAINQLL, VFAGALIVISMTILVVWVNVI, TAVLTFASLIGYAVIYTVYLK, IVIGGLAGATPPMLGWAAVTG, SLLVLIIFIWTPPHFWALAIF, VLLAIVTLLPVTVGMSGVFYL, GGAVVLNAVFLWYAWRMLNPP, and IVYLMALFAFLMVDHLLLPWV.

Belongs to the UbiA prenyltransferase family. Protoheme IX farnesyltransferase subfamily.

It is found in the cell inner membrane. It carries out the reaction heme b + (2E,6E)-farnesyl diphosphate + H2O = Fe(II)-heme o + diphosphate. The protein operates within porphyrin-containing compound metabolism; heme O biosynthesis; heme O from protoheme: step 1/1. Converts heme B (protoheme IX) to heme O by substitution of the vinyl group on carbon 2 of heme B porphyrin ring with a hydroxyethyl farnesyl side group. The protein is Protoheme IX farnesyltransferase of Xanthomonas oryzae pv. oryzae (strain MAFF 311018).